Consider the following 117-residue polypeptide: Dolichyl-diphosphooligosaccharide--protein glycosyltransferase subunit DAD1 (117 aa).

Over 1–33 (MAKTSSTTKDAQDLFHAIWSAYSATPTNLKIID) the chain is Cytoplasmic. The helical transmembrane segment at 34-54 (LYVVFAVFTALLQDVYMALVG) threads the bilayer. At 55-57 (PFP) the chain is on the lumenal side. Residues 58–78 (FNSFLSGVLSCVGTAVLAVCL) traverse the membrane as a helical segment. The Cytoplasmic segment spans residues 79–96 (RIQVNKENKEFKDLGPER). Residues 97–117 (AFADFVLCNLVLHLVIMNFLG) traverse the membrane as a helical segment.

It belongs to the DAD/OST2 family. In terms of assembly, component of the oligosaccharyltransferase (OST) complex.

It localises to the endoplasmic reticulum membrane. It participates in protein modification; protein glycosylation. Subunit of the oligosaccharyl transferase (OST) complex that catalyzes the initial transfer of a defined glycan (Glc(3)Man(9)GlcNAc(2) in eukaryotes) from the lipid carrier dolichol-pyrophosphate to an asparagine residue within an Asn-X-Ser/Thr consensus motif in nascent polypeptide chains, the first step in protein N-glycosylation. N-glycosylation occurs cotranslationally and the complex associates with the Sec61 complex at the channel-forming translocon complex that mediates protein translocation across the endoplasmic reticulum (ER). All subunits are required for a maximal enzyme activity. This chain is Dolichyl-diphosphooligosaccharide--protein glycosyltransferase subunit DAD1 (DAD1), found in Pisum sativum (Garden pea).